Consider the following 253-residue polypeptide: uncharacterized protein (253 aa).

It belongs to the methyltransferase superfamily.

This is an uncharacterized protein from Mycobacterium avium (strain 104).